A 441-amino-acid polypeptide reads, in one-letter code: Capsid protein (441 aa).

The segment at Asp-26–Pro-63 is disordered. Positions Lys-77 to Lys-79 match the Nuclear localization signal motif. The CCHC-type zinc finger occupies Cys-381 to Lys-398.

The protein belongs to the caulimoviridae capsid protein family. Interacts (via nuclear localization signal) with host importin alpha.

It localises to the virion. Its subcellular location is the host nucleus. In terms of biological role, self assembles to form an icosahedral capsid, about 50 nm in diameter, nm, composed of 420 subunits of the viral capsid protein. The capsid encapsulates the genomic dsDNA. Following virus entry into host cell, provides nuclear import of the viral genome. Virus particles do not enter the nucleus, but dock at the nuclear membrane through the interaction with host importins. This is Capsid protein from Soybean chlorotic mottle virus.